The following is a 316-amino-acid chain: UDP-3-O-acylglucosamine N-acyltransferase 2 (316 aa).

The active-site Proton acceptor is His230.

This sequence belongs to the transferase hexapeptide repeat family. LpxD subfamily. In terms of assembly, homotrimer.

It catalyses the reaction a UDP-3-O-[(3R)-3-hydroxyacyl]-alpha-D-glucosamine + a (3R)-hydroxyacyl-[ACP] = a UDP-2-N,3-O-bis[(3R)-3-hydroxyacyl]-alpha-D-glucosamine + holo-[ACP] + H(+). It participates in bacterial outer membrane biogenesis; LPS lipid A biosynthesis. Functionally, catalyzes the N-acylation of UDP-3-O-acylglucosamine using 3-hydroxyacyl-ACP as the acyl donor. Is involved in the biosynthesis of lipid A, a phosphorylated glycolipid that anchors the lipopolysaccharide to the outer membrane of the cell. This Sulfurimonas denitrificans (strain ATCC 33889 / DSM 1251) (Thiomicrospira denitrificans (strain ATCC 33889 / DSM 1251)) protein is UDP-3-O-acylglucosamine N-acyltransferase 2.